The primary structure comprises 333 residues: MSGFGDGYVGTAQDAVKIRRLEKQREAERRKIEELKNKSSDGQPGLLQFGSSTSEILETAFKKETVGLVTREQYVEKRVNIRTKIEEEEKEKLQKLQQEEEELQMQKRKKRRVRGDPRLSFCDEIENGSDEDEFENQEPQKKHGPVKLGKDPTVETSFLPDREREAEEQAERERLKKQWSREQELIKNEPLTITYSYWDGTGHRRVIQVRKGDSIGEFLRAVQQQLAPEFREVRTTSVENLLYVKEDLIIPHQHSFYELIINKARGKSGPLFHFDVHEDVRTIADATKEKDESHAGKVVERHWYEKNKHIFPASRWEIYDPTKKWERYTIHGD.

Coiled coils occupy residues 12 to 43 and 70 to 116; these read AQDAVKIRRLEKQREAERRKIEELKNKSSDGQ and TREQ…VRGD. Positions 89 to 98 are enriched in basic and acidic residues; the sequence is EKEKLQKLQQ. A disordered region spans residues 89 to 171; the sequence is EKEKLQKLQQ…REREAEEQAE (83 aa). Positions 123–136 are enriched in acidic residues; that stretch reads DEIENGSDEDEFEN. A compositionally biased stretch (basic and acidic residues) spans 160 to 171; that stretch reads PDREREAEEQAE.

Belongs to the FAM50 family.

It is found in the nucleus. In terms of biological role, involved in light regulation of the circadian clock and photomorphogenesis. The protein is Protein XAP5 CIRCADIAN TIMEKEEPER (XCT) of Oryza sativa subsp. indica (Rice).